A 76-amino-acid chain; its full sequence is Vasotab-TY3 (76 aa).

Residues 1 to 21 form the signal peptide; the sequence is MKFALFSVLVLMLIATFVAAD. In terms of domain architecture, Kazal-like spans 22 to 76; the sequence is DCPRICTSDYTPVCGTPSGGRRSANRTFANQCGLDSHNCLNKGDTYDKLHDGECK. 3 cysteine pairs are disulfide-bonded: C23–C60, C27–C53, and C35–C75.

In terms of tissue distribution, expressed by the salivary gland.

It is found in the secreted. Functionally, vasodilator protein that inhibits vasoconstriction of isolated rat femoral artery induced by phenylephrine. Since platelet aggregation and vasoconstriction are key hemostatic responses, particularly in small wounds, this protein likely participates in the antihemostatic responses during blood feeding. Blocks L-type calcium channels (Cav1/CACNA1) in left ventricular myocytes isolated from rat hearts. This is Vasotab-TY3 from Tabanus yao (Horsefly).